A 445-amino-acid chain; its full sequence is Cyclic GMP-AMP synthase-like receptor 1 (445 aa).

Mg(2+) is bound by residues E70, D72, and D186. ATP is bound at residue 70–72 (EYD). GTP-binding positions include D186 and 232 to 239 (RTSFYEAE). ATP-binding positions include 236 to 239 (YEAE), K257, and 270 to 274 (SYHIK). Residues 357-445 (LNDDNENSVH…KSKTTTPKPS (89 aa)) form a disordered region. Positions 377–398 (QKMEKTSTESEQKKPTETKPNA) are enriched in basic and acidic residues. Residues 435–445 (TKSKTTTPKPS) show a composition bias toward low complexity.

Belongs to the mab-21 family. The cofactor is Mg(2+). Mn(2+) is required as a cofactor.

The enzyme catalyses GTP + ATP = 3',2'-cGAMP + 2 diphosphate. It carries out the reaction GTP + ATP = pppA(2'-5')pG + diphosphate. It catalyses the reaction pppA(2'-5')pG = 3',2'-cGAMP + diphosphate. The enzyme activity is specifically activated by double-stranded RNA (dsRNA). Its function is as follows. Nucleotidyltransferase that catalyzes the formation of cyclic GMP-AMP (3',2'-cGAMP) from ATP and GTP and plays a key role in innate immunity. Synthesizes 3',2'-cGAMP in a two-step reaction through production of the linear intermediate pppA(2'-5')pG. Acts as a key sensor of double-stranded RNA (dsRNA), the presence of dsRNA in the cytoplasm being a danger signal that triggers the immune responses. Directly binds dsRNA, activating the nucleotidyltransferase activity, leading to synthesis of 3',2'-cGAMP, a second messenger that binds to and activates Sting, thereby triggering the antiviral immune response via activation of the NF-kappa-B transcription factor Rel (Relish). The sequence is that of Cyclic GMP-AMP synthase-like receptor 1 from Drosophila erecta (Fruit fly).